We begin with the raw amino-acid sequence, 342 residues long: Ribosomal RNA small subunit methyltransferase H (342 aa).

Residues G43–Y45, D61, F87, D108, and Q115 contribute to the S-adenosyl-L-methionine site. Residues A322–R342 are disordered.

It belongs to the methyltransferase superfamily. RsmH family.

Its subcellular location is the cytoplasm. It catalyses the reaction cytidine(1402) in 16S rRNA + S-adenosyl-L-methionine = N(4)-methylcytidine(1402) in 16S rRNA + S-adenosyl-L-homocysteine + H(+). Its function is as follows. Specifically methylates the N4 position of cytidine in position 1402 (C1402) of 16S rRNA. The polypeptide is Ribosomal RNA small subunit methyltransferase H (Hyphomonas neptunium (strain ATCC 15444)).